A 277-amino-acid chain; its full sequence is Glutamate racemase (277 aa).

Substrate-binding positions include 16–17 (DS) and 48–49 (YG). Cysteine 79 (proton donor/acceptor) is an active-site residue. 80 to 81 (NT) lines the substrate pocket. The active-site Proton donor/acceptor is the cysteine 191. Substrate is bound at residue 192-193 (TH).

The protein belongs to the aspartate/glutamate racemases family.

It carries out the reaction L-glutamate = D-glutamate. The protein operates within cell wall biogenesis; peptidoglycan biosynthesis. Its function is as follows. Provides the (R)-glutamate required for cell wall biosynthesis. In Symbiobacterium thermophilum (strain DSM 24528 / JCM 14929 / IAM 14863 / T), this protein is Glutamate racemase.